An 828-amino-acid polypeptide reads, in one-letter code: Periplasmic nitrate reductase (828 aa).

A signal peptide (tat-type signal) is located at residues 1 to 31 (MKLSRRSFMKANAVAAAAAAAGLSVPGVARA). Residues 39–95 (IKWDKAPCRFCGTGCGVLVGTQQGRVVACQGDPDAPVNRGLNCIKGYFLPKIMYGKD) enclose the 4Fe-4S Mo/W bis-MGD-type domain. Positions 46, 49, 53, and 81 each coordinate [4Fe-4S] cluster. Mo-bis(molybdopterin guanine dinucleotide) is bound by residues K83, Q150, N175, C179, 212–219 (WGSNMAEM), 243–247 (STFQH), 262–264 (QSD), M372, Q376, N482, 508–509 (SD), K531, D558, and 718–727 (TGRVLEHWHT). Residue F794 coordinates substrate. The Mo-bis(molybdopterin guanine dinucleotide) site is built by N802 and K819.

Belongs to the prokaryotic molybdopterin-containing oxidoreductase family. NasA/NapA/NarB subfamily. In terms of assembly, component of the periplasmic nitrate reductase NapAB complex composed of NapA and NapB. [4Fe-4S] cluster serves as cofactor. It depends on Mo-bis(molybdopterin guanine dinucleotide) as a cofactor. Post-translationally, predicted to be exported by the Tat system. The position of the signal peptide cleavage has not been experimentally proven.

Its subcellular location is the periplasm. The enzyme catalyses 2 Fe(II)-[cytochrome] + nitrate + 2 H(+) = 2 Fe(III)-[cytochrome] + nitrite + H2O. Functionally, catalytic subunit of the periplasmic nitrate reductase complex NapAB. Receives electrons from NapB and catalyzes the reduction of nitrate to nitrite. This chain is Periplasmic nitrate reductase, found in Salmonella paratyphi C (strain RKS4594).